The following is a 341-amino-acid chain: ATPase GET3 (341 aa).

Residue 34 to 41 (KGGVGKTT) coordinates ATP. Residue aspartate 63 is part of the active site. Residues glutamate 245 and asparagine 272 each coordinate ATP. Zn(2+) contacts are provided by cysteine 283 and cysteine 286.

Belongs to the arsA ATPase family. Homodimer.

The protein localises to the cytoplasm. The protein resides in the endoplasmic reticulum. In terms of biological role, ATPase required for the post-translational delivery of tail-anchored (TA) proteins to the endoplasmic reticulum. Recognizes and selectively binds the transmembrane domain of TA proteins in the cytosol. This complex then targets to the endoplasmic reticulum by membrane-bound receptors, where the tail-anchored protein is released for insertion. This process is regulated by ATP binding and hydrolysis. ATP binding drives the homodimer towards the closed dimer state, facilitating recognition of newly synthesized TA membrane proteins. ATP hydrolysis is required for insertion. Subsequently, the homodimer reverts towards the open dimer state, lowering its affinity for the membrane-bound receptor, and returning it to the cytosol to initiate a new round of targeting. The chain is ATPase GET3 from Ajellomyces dermatitidis (strain ER-3 / ATCC MYA-2586) (Blastomyces dermatitidis).